Consider the following 86-residue polypeptide: Mu-theraphotoxin-Hhn1d (86 aa).

The signal sequence occupies residues 1 to 21; sequence MKASMFLALAGLALLFVVCYA. The propeptide occupies 22–49; that stretch reads SESEEKEFSNELLSSVLAVDDNSKGEER. Disulfide bonds link Cys51/Cys66, Cys58/Cys73, and Cys65/Cys80. Ile84 bears the Isoleucine amide mark.

Belongs to the neurotoxin 10 (Hwtx-1) family. 22 (Htx-4) subfamily. Monomer. Expressed by the venom gland.

Its subcellular location is the secreted. Neurotoxin. Selectively blocks neuronal tetrodotoxin-sensitive voltage-gated sodium channels (Nav). Does not affect tetrodotoxin-resistant voltage-gated sodium channels or calcium channels. The polypeptide is Mu-theraphotoxin-Hhn1d (Cyriopagopus hainanus (Chinese bird spider)).